The primary structure comprises 620 residues: 1-deoxy-D-xylulose-5-phosphate synthase (620 aa).

Residues His80 and 121–123 (GHS) contribute to the thiamine diphosphate site. Asp152 lines the Mg(2+) pocket. Thiamine diphosphate-binding positions include 153-154 (GA), Asn181, Tyr288, and Glu370. Asn181 lines the Mg(2+) pocket.

It belongs to the transketolase family. DXPS subfamily. As to quaternary structure, homodimer. Mg(2+) serves as cofactor. Requires thiamine diphosphate as cofactor.

The enzyme catalyses D-glyceraldehyde 3-phosphate + pyruvate + H(+) = 1-deoxy-D-xylulose 5-phosphate + CO2. Its pathway is metabolic intermediate biosynthesis; 1-deoxy-D-xylulose 5-phosphate biosynthesis; 1-deoxy-D-xylulose 5-phosphate from D-glyceraldehyde 3-phosphate and pyruvate: step 1/1. Its function is as follows. Catalyzes the acyloin condensation reaction between C atoms 2 and 3 of pyruvate and glyceraldehyde 3-phosphate to yield 1-deoxy-D-xylulose-5-phosphate (DXP). The polypeptide is 1-deoxy-D-xylulose-5-phosphate synthase (Klebsiella pneumoniae (strain 342)).